The chain runs to 445 residues: von Willebrand factor A domain-containing protein 1 (445 aa).

The signal sequence occupies residues 1-22 (MLPWTALGLALSLRLALARSGA). The region spanning 34-213 (DLMFLLDSSA…ELRGSILDAM (180 aa)) is the VWFA domain. Phosphoserine; by FAM20C is present on residues Ser-74 and Ser-80. Residue Tyr-83 is modified to Phosphotyrosine. Ser-93 is subject to Phosphoserine; by FAM20C. The Fibronectin type-III 1 domain occupies 214–304 (RPQQLHATEI…QILRVRTRPG (91 aa)). Asn-264 is a glycosylation site (N-linked (GlcNAc...) asparagine). Disordered regions lie at residues 302–325 (RPGE…TQLA) and 411–445 (RESA…SREP). Low complexity predominate over residues 311-325 (SGPESGAGPAPTQLA). The Fibronectin type-III 2 domain maps to 334–427 (GPERIVISHA…KACTPDGPRP (94 aa)).

Homodimer or homomultimer; disulfide-linked. Interacts with HSPG2. Post-translationally, N-glycosylated.

The protein localises to the secreted. It localises to the extracellular space. It is found in the extracellular matrix. Its subcellular location is the basement membrane. In terms of biological role, promotes matrix assembly. Involved in the organization of skeletal muscles and in the formation of neuromuscular junctions. The chain is von Willebrand factor A domain-containing protein 1 from Homo sapiens (Human).